The chain runs to 578 residues: CTP synthase 2 (578 aa).

A Glutamine amidotransferase type-1 domain is found at 300–553; that stretch reads SIALVGKYTK…MLAASGKLNT (254 aa). Catalysis depends on for GATase activity residues Cys-399, His-526, and Glu-528.

The protein belongs to the CTP synthase family.

The enzyme catalyses UTP + L-glutamine + ATP + H2O = CTP + L-glutamate + ADP + phosphate + 2 H(+). The protein operates within pyrimidine metabolism; CTP biosynthesis via de novo pathway; CTP from UDP: step 2/2. Functionally, catalyzes the ATP-dependent amination of UTP to CTP with either L-glutamine or ammonia as the source of nitrogen. Constitutes the rate-limiting enzyme in the synthesis of cytosine nucleotides. The polypeptide is CTP synthase 2 (ctps2) (Xenopus laevis (African clawed frog)).